The following is a 111-amino-acid chain: uncharacterized protein (111 aa).

2 consecutive transmembrane segments (helical) span residues 7–27 and 53–73; these read ILNI…SMMI and AFAM…TFLH.

The protein resides in the cell membrane. This is an uncharacterized protein from Bacillus anthracis.